Here is a 574-residue protein sequence, read N- to C-terminus: Tyrosinase (574 aa).

Positions 67, 95, 104, 275, 279, and 304 each coordinate Cu cation. The segment at residues 93-95 (CTH) is a cross-link (2'-(S-cysteinyl)-histidine (Cys-His)).

The protein belongs to the tyrosinase family. Requires Cu(2+) as cofactor.

It carries out the reaction 2 L-dopa + O2 = 2 L-dopaquinone + 2 H2O. It catalyses the reaction L-tyrosine + O2 = L-dopaquinone + H2O. This is a copper-containing oxidase that functions in the formation of pigments such as melanins and other polyphenolic compounds. The polypeptide is Tyrosinase (TYR) (Podospora anserina (Pleurage anserina)).